Reading from the N-terminus, the 127-residue chain is Small ribosomal subunit protein uS11 (127 aa).

Belongs to the universal ribosomal protein uS11 family. Part of the 30S ribosomal subunit. Interacts with proteins S7 and S18. Binds to IF-3.

Located on the platform of the 30S subunit, it bridges several disparate RNA helices of the 16S rRNA. Forms part of the Shine-Dalgarno cleft in the 70S ribosome. In Streptococcus suis (strain 98HAH33), this protein is Small ribosomal subunit protein uS11.